The sequence spans 145 residues: MSLLLPPLALLLLLAALVAPATAATAYRPDWNRLSGLTRARVETCGGUQLNRLKEVKAFVTQDIPFYHNLVMKHLPGADPELVLLGRRYEELERIPLSEMTREEINALVQELGFYRKAAPDAQVPPEYVWAPAKPPEETSDHADL.

Residues 1–23 (MSLLLPPLALLLLLAALVAPATA) form the signal peptide. Residues Cys45 and Sec48 each act as nucleophile in the active site. The cysteinyl-selenocysteine (Cys-Sec) cross-link spans 45 to 48 (CGGU). Residue Sec48 is a non-standard amino acid, selenocysteine.

The protein belongs to the selenoprotein M/F family. In terms of tissue distribution, widely expressed.

The protein resides in the cytoplasm. The protein localises to the perinuclear region. It is found in the endoplasmic reticulum. It localises to the golgi apparatus. May function as a thiol-disulfide oxidoreductase that participates in disulfide bond formation. This Homo sapiens (Human) protein is Selenoprotein M.